The following is a 440-amino-acid chain: Tryptophan synthase beta chain (440 aa).

Lysine 110 carries the N6-(pyridoxal phosphate)lysine modification.

The protein belongs to the TrpB family. In terms of assembly, tetramer of two alpha and two beta chains. Requires pyridoxal 5'-phosphate as cofactor.

The catalysed reaction is (1S,2R)-1-C-(indol-3-yl)glycerol 3-phosphate + L-serine = D-glyceraldehyde 3-phosphate + L-tryptophan + H2O. It functions in the pathway amino-acid biosynthesis; L-tryptophan biosynthesis; L-tryptophan from chorismate: step 5/5. Functionally, the beta subunit is responsible for the synthesis of L-tryptophan from indole and L-serine. In Thermococcus gammatolerans (strain DSM 15229 / JCM 11827 / EJ3), this protein is Tryptophan synthase beta chain.